We begin with the raw amino-acid sequence, 300 residues long: 4-hydroxy-tetrahydrodipicolinate synthase (300 aa).

Residue Thr-46 participates in pyruvate binding. Tyr-135 (proton donor/acceptor) is an active-site residue. The Schiff-base intermediate with substrate role is filled by Lys-163. Val-205 is a binding site for pyruvate.

It belongs to the DapA family. In terms of assembly, homotetramer; dimer of dimers.

It localises to the cytoplasm. The catalysed reaction is L-aspartate 4-semialdehyde + pyruvate = (2S,4S)-4-hydroxy-2,3,4,5-tetrahydrodipicolinate + H2O + H(+). It participates in amino-acid biosynthesis; L-lysine biosynthesis via DAP pathway; (S)-tetrahydrodipicolinate from L-aspartate: step 3/4. Functionally, catalyzes the condensation of (S)-aspartate-beta-semialdehyde [(S)-ASA] and pyruvate to 4-hydroxy-tetrahydrodipicolinate (HTPA). The protein is 4-hydroxy-tetrahydrodipicolinate synthase of Koribacter versatilis (strain Ellin345).